Consider the following 122-residue polypeptide: Large ribosomal subunit protein uL14 (122 aa).

This sequence belongs to the universal ribosomal protein uL14 family. As to quaternary structure, part of the 50S ribosomal subunit. Forms a cluster with proteins L3 and L19. In the 70S ribosome, L14 and L19 interact and together make contacts with the 16S rRNA in bridges B5 and B8.

Its function is as follows. Binds to 23S rRNA. Forms part of two intersubunit bridges in the 70S ribosome. The polypeptide is Large ribosomal subunit protein uL14 (Caulobacter vibrioides (strain ATCC 19089 / CIP 103742 / CB 15) (Caulobacter crescentus)).